Reading from the N-terminus, the 582-residue chain is SUMO-activating enzyme subunit uba-2 (582 aa).

ATP is bound by residues 20-25 (GAGGIG), Asp44, 52-55 (NLNR), Lys68, 91-92 (SI), and 113-118 (DNRAAR). 2 residues coordinate Zn(2+): Cys154 and Cys157. Cys170 (glycyl thioester intermediate) is an active-site residue. The segment covering 204–214 (SPDMDAVDPDN) has biased composition (acidic residues). The segment at 204-235 (SPDMDAVDPDNTEAVTTEKEKEAMKEEPAPVG) is disordered. Positions 219 to 231 (TTEKEKEAMKEEP) are enriched in basic and acidic residues. Cys431 and Cys434 together coordinate Zn(2+). Positions 531 to 570 (FEVARSEKEPEPDDRKRKADGSEEPEAKRQKVEEKDDKNG) are enriched in basic and acidic residues. A disordered region spans residues 531–582 (FEVARSEKEPEPDDRKRKADGSEEPEAKRQKVEEKDDKNGNEAVAEITETMA).

Belongs to the ubiquitin-activating E1 family. Heterodimer with aos-1.

The protein operates within protein modification; protein sumoylation. In terms of biological role, the dimeric enzyme acts as an E1 ligase for smo-1. It mediates ATP-dependent activation of smo-1 and formation of a thioester with a conserved cysteine residue on uba-2. The protein is SUMO-activating enzyme subunit uba-2 (uba-2) of Caenorhabditis elegans.